The following is a 148-amino-acid chain: Large ribosomal subunit protein uL15 (148 aa).

A compositionally biased stretch (basic residues) spans 1–30 (MPSRLRKTRKLRGHVSHGHGRIGKHRKHPG). The disordered stretch occupies residues 1–37 (MPSRLRKTRKLRGHVSHGHGRIGKHRKHPGGRGNAGG). Position 39 is a (3S)-3-hydroxyhistidine (H39). 2 positions are modified to N6-acetyllysine: K47 and K55. Phosphoserine is present on S68. The residue at position 110 (K110) is an N6-acetyllysine.

Belongs to the universal ribosomal protein uL15 family. As to quaternary structure, component of the large ribosomal subunit. In terms of processing, hydroxylated on His-39 by MINA.

It is found in the cytoplasm. Functionally, component of the large ribosomal subunit. The ribosome is a large ribonucleoprotein complex responsible for the synthesis of proteins in the cell. In Bos taurus (Bovine), this protein is Large ribosomal subunit protein uL15 (RPL27A).